An 818-amino-acid chain; its full sequence is Hillarin (818 aa).

The 68-residue stretch at serine 9 to glycine 76 folds into the LIM zinc-binding domain. The disordered stretch occupies residues phenylalanine 97–lysine 141. Residues serine 117–aspartate 137 are compositionally biased toward polar residues. A coiled-coil region spans residues glutamine 216–serine 272.

This sequence belongs to the transglutaminase-like superfamily. Interacts with pnut. As to expression, localizes to the neuropil of the embryonic central nervous system (at protein level). Also detected in third instar larval brain (at protein level).

The protein localises to the cytoplasm. The protein resides in the cell cortex. Its subcellular location is the cleavage furrow. May act as a modulator of septin function during cytokinesis in the developing nervous system. This chain is Hillarin, found in Drosophila melanogaster (Fruit fly).